Consider the following 376-residue polypeptide: Phosphate acyltransferase (376 aa).

Residues 334-376 (AGSLEQAKRDAGGPGSASQMASPIAGPVSGQPAEPYSAQSSKA) form a disordered region.

This sequence belongs to the PlsX family. In terms of assembly, homodimer. Probably interacts with PlsY.

It is found in the cytoplasm. It carries out the reaction a fatty acyl-[ACP] + phosphate = an acyl phosphate + holo-[ACP]. Its pathway is lipid metabolism; phospholipid metabolism. In terms of biological role, catalyzes the reversible formation of acyl-phosphate (acyl-PO(4)) from acyl-[acyl-carrier-protein] (acyl-ACP). This enzyme utilizes acyl-ACP as fatty acyl donor, but not acyl-CoA. This chain is Phosphate acyltransferase, found in Paraburkholderia phymatum (strain DSM 17167 / CIP 108236 / LMG 21445 / STM815) (Burkholderia phymatum).